The chain runs to 200 residues: GTP cyclohydrolase-2 (200 aa).

R49–E53 contributes to the GTP binding site. Positions 54, 65, and 67 each coordinate Zn(2+). GTP is bound by residues Q70, E92–R94, and T114. D126 acts as the Proton acceptor in catalysis. The Nucleophile role is filled by R128. 2 residues coordinate GTP: T149 and K154.

This sequence belongs to the GTP cyclohydrolase II family. Homodimer. Zn(2+) is required as a cofactor.

It carries out the reaction GTP + 4 H2O = 2,5-diamino-6-hydroxy-4-(5-phosphoribosylamino)-pyrimidine + formate + 2 phosphate + 3 H(+). The protein operates within cofactor biosynthesis; riboflavin biosynthesis; 5-amino-6-(D-ribitylamino)uracil from GTP: step 1/4. Catalyzes the conversion of GTP to 2,5-diamino-6-ribosylamino-4(3H)-pyrimidinone 5'-phosphate (DARP), formate and pyrophosphate. The chain is GTP cyclohydrolase-2 from Klebsiella pneumoniae subsp. pneumoniae (strain ATCC 700721 / MGH 78578).